The following is a 221-amino-acid chain: Ribosomal RNA small subunit methyltransferase G 3 (221 aa).

S-adenosyl-L-methionine is bound by residues Gly-85, Phe-90, Ile-136–Glu-137, and Arg-150.

The protein belongs to the methyltransferase superfamily. RNA methyltransferase RsmG family.

It localises to the cytoplasm. It carries out the reaction guanosine(527) in 16S rRNA + S-adenosyl-L-methionine = N(7)-methylguanosine(527) in 16S rRNA + S-adenosyl-L-homocysteine. In terms of biological role, specifically methylates the N7 position of guanine in position 527 of 16S rRNA. This chain is Ribosomal RNA small subunit methyltransferase G 3, found in Bdellovibrio bacteriovorus (strain ATCC 15356 / DSM 50701 / NCIMB 9529 / HD100).